A 410-amino-acid chain; its full sequence is Adenosylhomocysteinase (410 aa).

Substrate-binding residues include Asp117 and Glu142. 143–145 (TTT) is a binding site for NAD(+). Substrate-binding residues include Lys172 and Asp176. NAD(+) contacts are provided by residues Asn177, 206–211 (GYGYCG), Glu229, 285–287 (AGH), and Asn332.

Belongs to the adenosylhomocysteinase family. NAD(+) is required as a cofactor.

It localises to the cytoplasm. The enzyme catalyses S-adenosyl-L-homocysteine + H2O = L-homocysteine + adenosine. It participates in amino-acid biosynthesis; L-homocysteine biosynthesis; L-homocysteine from S-adenosyl-L-homocysteine: step 1/1. Its function is as follows. May play a key role in the regulation of the intracellular concentration of adenosylhomocysteine. The protein is Adenosylhomocysteinase of Thermoplasma acidophilum (strain ATCC 25905 / DSM 1728 / JCM 9062 / NBRC 15155 / AMRC-C165).